A 65-amino-acid polypeptide reads, in one-letter code: U2-theraphotoxin-Pc1a (65 aa).

A signal peptide spans 1–20; that stretch reads MGFKLVLFIAVLTLVGSSNA. A propeptide spanning residues 21-36 is cleaved from the precursor; sequence EISAKMDSRDSPMIQE. Disulfide bonds link cysteine 39-cysteine 56, cysteine 46-cysteine 59, and cysteine 55-cysteine 64.

The protein belongs to the neurotoxin 36 family. 02 subfamily. In terms of tissue distribution, expressed by the venom gland.

The protein localises to the secreted. In terms of biological role, possesses strong antiplasmodial activity against the intra-erythrocyte stage of P.falciparum in vitro. IC(50) for inhibiting P.falciparum growth is 1.15 uM. Specifically interacts with infected erythrocytes. Does not lyse erythrocytes, is not cytotoxic to nucleated mammalian cells, and does not inhibit neuromuscular function. Has neither antibacterial nor antifungal activity. This is U2-theraphotoxin-Pc1a from Psalmopoeus cambridgei (Trinidad chevron tarantula).